Consider the following 182-residue polypeptide: Small ribosomal subunit protein uS4 (182 aa).

Disordered regions lie at residues 1 to 23 (MGHP…ADRI) and 158 to 182 (SSVA…KDEE). The S4 RNA-binding domain maps to 103 to 170 (RRLQSLVFKR…AKQFETQETE (68 aa)). A compositionally biased stretch (acidic residues) spans 167–182 (QETEEVAAEEEPKDEE).

It belongs to the universal ribosomal protein uS4 family. In terms of assembly, part of the 30S ribosomal subunit. Contacts protein S5. The interaction surface between S4 and S5 is involved in control of translational fidelity.

Functionally, one of the primary rRNA binding proteins, it binds directly to 16S rRNA where it nucleates assembly of the body of the 30S subunit. With S5 and S12 plays an important role in translational accuracy. This Methanosphaera stadtmanae (strain ATCC 43021 / DSM 3091 / JCM 11832 / MCB-3) protein is Small ribosomal subunit protein uS4.